Consider the following 302-residue polypeptide: DNA-directed RNA polymerase II subunit rpb3 (302 aa).

This sequence belongs to the archaeal Rpo3/eukaryotic RPB3 RNA polymerase subunit family. Component of the RNA polymerase II (Pol II) complex consisting of 12 subunits.

The protein localises to the nucleus. In terms of biological role, DNA-dependent RNA polymerase catalyzes the transcription of DNA into RNA using the four ribonucleoside triphosphates as substrates. Component of RNA polymerase II which synthesizes mRNA precursors and many functional non-coding RNAs. Pol II is the central component of the basal RNA polymerase II transcription machinery. It is composed of mobile elements that move relative to each other. Rpb3 is part of the core element with the central large cleft and the clamp element that moves to open and close the cleft. The sequence is that of DNA-directed RNA polymerase II subunit rpb3 (polr2c) from Dictyostelium discoideum (Social amoeba).